The following is a 169-amino-acid chain: Phosphopantetheine adenylyltransferase (169 aa).

S10 lines the substrate pocket. Residues 10 to 11 (SF) and H18 contribute to the ATP site. 3 residues coordinate substrate: K42, T79, and R93. ATP is bound by residues 94 to 96 (GLR), E104, and 129 to 135 (VRPITAT).

Belongs to the bacterial CoaD family. As to quaternary structure, homohexamer. Mg(2+) serves as cofactor.

The protein resides in the cytoplasm. It carries out the reaction (R)-4'-phosphopantetheine + ATP + H(+) = 3'-dephospho-CoA + diphosphate. The protein operates within cofactor biosynthesis; coenzyme A biosynthesis; CoA from (R)-pantothenate: step 4/5. Its function is as follows. Reversibly transfers an adenylyl group from ATP to 4'-phosphopantetheine, yielding dephospho-CoA (dPCoA) and pyrophosphate. In Rhodopseudomonas palustris (strain TIE-1), this protein is Phosphopantetheine adenylyltransferase.